We begin with the raw amino-acid sequence, 276 residues long: Rhomboid protease GlpG (276 aa).

Transmembrane regions (helical) follow at residues 94–114 (AGPLTLSVMVVTIAVFILMQI), 142–162 (ALLHFSLLHILFNLMWWWYLG), 168–188 (VLGTGKLLVIALVSALVSGWA), 193–213 (SGTYFGGLSGVVYALMGYVWL), 229–249 (LMAFALLWLVAGYFDILGMSI), and 250–270 (ANAAHVAGLIVGLLMAFWDTY). The active-site Nucleophile is the S201. Residue H254 is part of the active site.

This sequence belongs to the peptidase S54 family.

The protein localises to the cell inner membrane. The catalysed reaction is Cleaves type-1 transmembrane domains using a catalytic dyad composed of serine and histidine that are contributed by different transmembrane domains.. Rhomboid-type serine protease that catalyzes intramembrane proteolysis. This chain is Rhomboid protease GlpG, found in Pectobacterium atrosepticum (strain SCRI 1043 / ATCC BAA-672) (Erwinia carotovora subsp. atroseptica).